The sequence spans 688 residues: Protein sel-1 homolog 2 (688 aa).

The signal sequence occupies residues 1 to 23 (MKPLSLLIEILIILGVTIKTIKA). At 24 to 662 (EEHNKRQKER…RWNWLKLDNT (639 aa)) the chain is on the extracellular side. Asn-34 carries N-linked (GlcNAc...) asparagine glycosylation. Sel1-like repeat units follow at residues 107–142 (GDQL…DMGN), 143–178 (LKAM…KEGS), 179–214 (CKAQ…AGGN), 215–250 (MMSQ…DYIA), 297–333 (VQIQ…KAGS), 334–370 (ANAM…SKGN), 371–406 (AIGL…EKGW), 407–442 (PDAQ…QSGQ), 443–478 (PLAI…ELGH), 551–586 (AFAR…NKYH), and 588–623 (AQAM…QTSP). A helical membrane pass occupies residues 663–683 (IGPHWDLFVIGLIVPGLILLL). Residues 684 to 688 (RNHHG) are Cytoplasmic-facing.

This sequence belongs to the sel-1 family.

The protein resides in the membrane. It is found in the cell projection. The protein localises to the cilium. Its subcellular location is the nucleus speckle. This Homo sapiens (Human) protein is Protein sel-1 homolog 2 (SEL1L2).